A 478-amino-acid chain; its full sequence is ATP synthase subunit beta (478 aa).

Position 160–167 (160–167 (GGAGVGKT)) interacts with ATP.

The protein belongs to the ATPase alpha/beta chains family. As to quaternary structure, F-type ATPases have 2 components, CF(1) - the catalytic core - and CF(0) - the membrane proton channel. CF(1) has five subunits: alpha(3), beta(3), gamma(1), delta(1), epsilon(1). CF(0) has three main subunits: a(1), b(2) and c(9-12). The alpha and beta chains form an alternating ring which encloses part of the gamma chain. CF(1) is attached to CF(0) by a central stalk formed by the gamma and epsilon chains, while a peripheral stalk is formed by the delta and b chains.

The protein localises to the cell inner membrane. The catalysed reaction is ATP + H2O + 4 H(+)(in) = ADP + phosphate + 5 H(+)(out). In terms of biological role, produces ATP from ADP in the presence of a proton gradient across the membrane. The catalytic sites are hosted primarily by the beta subunits. This chain is ATP synthase subunit beta, found in Orientia tsutsugamushi (strain Ikeda) (Rickettsia tsutsugamushi).